The chain runs to 401 residues: Elongation factor Tu 2 (401 aa).

The tr-type G domain occupies 10-209 (KPHVNVGTIG…AVDEYIPTPV (200 aa)). A G1 region spans residues 19-26 (GHVDHGKT). 19-26 (GHVDHGKT) contacts GTP. Residue Thr26 coordinates Mg(2+). The segment at 60–64 (GITIA) is G2. The G3 stretch occupies residues 81–84 (DCPG). GTP contacts are provided by residues 81–85 (DCPGH) and 136–139 (NKVD). Positions 136-139 (NKVD) are G4. The tract at residues 174–176 (SAL) is G5.

Belongs to the TRAFAC class translation factor GTPase superfamily. Classic translation factor GTPase family. EF-Tu/EF-1A subfamily. Monomer.

It localises to the cytoplasm. The catalysed reaction is GTP + H2O = GDP + phosphate + H(+). In terms of biological role, GTP hydrolase that promotes the GTP-dependent binding of aminoacyl-tRNA to the A-site of ribosomes during protein biosynthesis. The chain is Elongation factor Tu 2 from Roseiflexus sp. (strain RS-1).